Consider the following 31-residue polypeptide: Cytochrome b6-f complex subunit 6 (31 aa).

A helical transmembrane segment spans residues 4–26 (LTSYFGFLLAALTITSALFIGLN).

This sequence belongs to the PetL family. In terms of assembly, the 4 large subunits of the cytochrome b6-f complex are cytochrome b6, subunit IV (17 kDa polypeptide, PetD), cytochrome f and the Rieske protein, while the 4 small subunits are PetG, PetL, PetM and PetN. The complex functions as a dimer.

It localises to the plastid. Its subcellular location is the chloroplast thylakoid membrane. Component of the cytochrome b6-f complex, which mediates electron transfer between photosystem II (PSII) and photosystem I (PSI), cyclic electron flow around PSI, and state transitions. PetL is important for photoautotrophic growth as well as for electron transfer efficiency and stability of the cytochrome b6-f complex. The sequence is that of Cytochrome b6-f complex subunit 6 from Amaranthus caudatus (Love-lies-bleeding).